Reading from the N-terminus, the 85-residue chain is Protein AC4 (85 aa).

Glycine 2 carries N-myristoyl glycine; by host lipidation.

The protein belongs to the geminiviridae protein AC4/C4 family. Interacts with Arabidopsis thaliana ASK7/ASK-eta and ASK6/ASK-zeta proteins. Post-translationally, phosphorylated by Arabidopsis thaliana ASK7/ASK-eta mainly on threonine and serine residues.

The protein localises to the host cell membrane. Its function is as follows. Pathogenicity determinant. May act as a suppressor of RNA-mediated gene silencing, also known as post-transcriptional gene silencing (PTGS), a mechanism of plant viral defense that limits the accumulation of viral RNAs. May repress the AL61 promoter. The chain is Protein AC4 from Solanum lycopersicum (Tomato).